The sequence spans 207 residues: Ribosomal RNA small subunit methyltransferase G (207 aa).

S-adenosyl-L-methionine is bound by residues Gly-73, Leu-78, 124-125, and Arg-139; that span reads VE.

This sequence belongs to the methyltransferase superfamily. RNA methyltransferase RsmG family.

The protein resides in the cytoplasm. The catalysed reaction is guanosine(527) in 16S rRNA + S-adenosyl-L-methionine = N(7)-methylguanosine(527) in 16S rRNA + S-adenosyl-L-homocysteine. Functionally, specifically methylates the N7 position of guanine in position 527 of 16S rRNA. This is Ribosomal RNA small subunit methyltransferase G from Enterobacter sp. (strain 638).